The following is a 202-amino-acid chain: Na(+)-translocating NADH-quinone reductase subunit E (202 aa).

The next 6 helical transmembrane spans lie at 11–31 (AIFV…FLAI), 35–55 (IEAA…TVPV), 81–101 (FLGL…MEMV), 114–134 (GVFL…LFMV), 144–164 (LVYG…LAGI), and 180–200 (LGIT…FSGI).

The protein belongs to the NqrDE/RnfAE family. Composed of six subunits; NqrA, NqrB, NqrC, NqrD, NqrE and NqrF.

Its subcellular location is the cell inner membrane. The enzyme catalyses a ubiquinone + n Na(+)(in) + NADH + H(+) = a ubiquinol + n Na(+)(out) + NAD(+). NQR complex catalyzes the reduction of ubiquinone-1 to ubiquinol by two successive reactions, coupled with the transport of Na(+) ions from the cytoplasm to the periplasm. NqrA to NqrE are probably involved in the second step, the conversion of ubisemiquinone to ubiquinol. This Marinobacter nauticus (strain ATCC 700491 / DSM 11845 / VT8) (Marinobacter aquaeolei) protein is Na(+)-translocating NADH-quinone reductase subunit E.